Here is a 188-residue protein sequence, read N- to C-terminus: U1 small nuclear ribonucleoprotein C-2 (188 aa).

The Matrin-type zinc-finger motif lies at 4–36; sequence YYCDYCDVFLVSESPSVRKAHNSGRNHLTNVRD. A disordered region spans residues 57–188; sequence FETGGGNSTS…MNPDRARQLG (132 aa). The segment covering 72–82 has biased composition (pro residues); it reads GNPPGSQPGPP. Over residues 109 to 124 the composition is skewed to low complexity; sequence AMLALMNGQNGMSSPG. Pro residues predominate over residues 125-141; the sequence is SGPPPMRFAGPPIPNNM.

This sequence belongs to the U1 small nuclear ribonucleoprotein C family. In terms of assembly, U1 snRNP is composed of the 7 core Sm proteins B/B', D1, D2, D3, E, F and G that assemble in a heptameric protein ring on the Sm site of the small nuclear RNA to form the core snRNP, and at least 3 U1 snRNP-specific proteins U1-70K, U1-A and U1-C. U1-C interacts with U1 snRNA and the 5' splice-site region of the pre-mRNA.

It is found in the nucleus. Its function is as follows. Component of the spliceosomal U1 snRNP, which is essential for recognition of the pre-mRNA 5' splice-site and the subsequent assembly of the spliceosome. U1-C is directly involved in initial 5' splice-site recognition for both constitutive and regulated alternative splicing. The interaction with the 5' splice-site seems to precede base-pairing between the pre-mRNA and the U1 snRNA. Stimulates commitment or early (E) complex formation by stabilizing the base pairing of the 5' end of the U1 snRNA and the 5' splice-site region. The sequence is that of U1 small nuclear ribonucleoprotein C-2 from Puccinia graminis f. sp. tritici (strain CRL 75-36-700-3 / race SCCL) (Black stem rust fungus).